A 73-amino-acid chain; its full sequence is Protein SlyX homolog (73 aa).

The protein belongs to the SlyX family.

This chain is Protein SlyX homolog, found in Pasteurella multocida (strain Pm70).